The sequence spans 653 residues: MAHTHLGRAVKNIEAPRPLKTQSRSSLKNSYLVIEELIQLIDNVTVGLQSCNTTPESITLLLHNLRVHGPQLEAVSKDTLDRAFVVFRNASQDERLNITTRLKLLELIELRAKSWDNDDTIAYYKSKQQISNVELPSEYQYDAGVQPGAFSTSPTFGVSGGVGGVNDGAAAAAAAVFNAASAAAAAQAAAIAAVGTSNQQHMLLPPGEVIRNSGKFPKPTKIPGKTYCKDEVVIRNADSGKVMGIKGRRVHMIEELSETIISFQRVNPGAKERLVQITGPAEDKINYAKQLMEDTIRRNASPVRLEPAPAVGGSCSSLNSSNSDDAIVQPRTPTGSSLANRLSFNSAQNFMTATAAAQQISQQMHHQTHHLQHQQQQQVAAVAAAAAAAAHAQATAAAGKVLRPNQQLLMHSYSTNDASVGEYKFTVNVGQHLIKITGDCCELVRVAKLVLDDYFSSSEFLASIEAGAAFDGTSLVTTPSTPLPGAGPPQFWLPGTDSGIGLNCVVSSSANNNGEGDDEVFAEPSNGGSSTSNQNGLARSRRSHFSRKESTPETKGAREKGDLDDLAGTNSLKSNASRVSYDIEHLLYYSMSPHSWTLPTDWQKMQETAPSILRNKDLQDESQRFDGDKYLASIKTAAKRDIVAADEVETLDE.

In terms of domain architecture, KH spans 227 to 292 (YCKDEVVIRN…DKINYAKQLM (66 aa)). Disordered stretches follow at residues 311–335 (VGGS…TPTG) and 515–570 (EGDD…AGTN). 2 stretches are compositionally biased toward low complexity: residues 314–323 (SCSSLNSSNS) and 525–536 (SNGGSSTSNQNG). Positions 546 to 563 (SRKESTPETKGAREKGDL) are enriched in basic and acidic residues.

As to quaternary structure, interacts with eukaryotic translation initiation factor eIF4E1. Also interacts with eukaryotic translation initiation factor 3 complex members eif3-S9/eif3b, Int6/eif3e and eIF-3p40/eif3h and with CG3225.

It localises to the cytoplasm. The protein localises to the cytoplasmic ribonucleoprotein granule. Plays a role in promoting translation. The sequence is that of Eukaryotic translation initiation factor 4E-binding protein Mextli from Drosophila melanogaster (Fruit fly).